An 88-amino-acid polypeptide reads, in one-letter code: uncharacterized protein (88 aa).

This is an uncharacterized protein from Lymantria dispar multicapsid nuclear polyhedrosis virus (LdMNPV).